Consider the following 27-residue polypeptide: Larval-specific very high density lipoprotein (27 aa).

Homodimer. In terms of tissue distribution, hemolymph.

It localises to the secreted. The protein resides in the extracellular space. Unknown (it might play a role in lipid transport and/or storage protein metabolism during metamorphosis). This is Larval-specific very high density lipoprotein from Apis mellifera (Honeybee).